Here is a 375-residue protein sequence, read N- to C-terminus: Queuine tRNA-ribosyltransferase (375 aa).

Asp89 (proton acceptor) is an active-site residue. Residues 89–93, Asp143, Gln187, and Gly214 each bind substrate; that span reads DSGGF. Residues 245–251 form an RNA binding region; that stretch reads GVGKPED. The active-site Nucleophile is Asp264. An RNA binding; important for wobble base 34 recognition region spans residues 269–273; sequence TRNAR. Zn(2+) is bound by residues Cys302, Cys304, Cys307, and His333.

The protein belongs to the queuine tRNA-ribosyltransferase family. Homodimer. Within each dimer, one monomer is responsible for RNA recognition and catalysis, while the other monomer binds to the replacement base PreQ1. The cofactor is Zn(2+).

The enzyme catalyses 7-aminomethyl-7-carbaguanine + guanosine(34) in tRNA = 7-aminomethyl-7-carbaguanosine(34) in tRNA + guanine. It functions in the pathway tRNA modification; tRNA-queuosine biosynthesis. Catalyzes the base-exchange of a guanine (G) residue with the queuine precursor 7-aminomethyl-7-deazaguanine (PreQ1) at position 34 (anticodon wobble position) in tRNAs with GU(N) anticodons (tRNA-Asp, -Asn, -His and -Tyr). Catalysis occurs through a double-displacement mechanism. The nucleophile active site attacks the C1' of nucleotide 34 to detach the guanine base from the RNA, forming a covalent enzyme-RNA intermediate. The proton acceptor active site deprotonates the incoming PreQ1, allowing a nucleophilic attack on the C1' of the ribose to form the product. After dissociation, two additional enzymatic reactions on the tRNA convert PreQ1 to queuine (Q), resulting in the hypermodified nucleoside queuosine (7-(((4,5-cis-dihydroxy-2-cyclopenten-1-yl)amino)methyl)-7-deazaguanosine). In Salmonella typhi, this protein is Queuine tRNA-ribosyltransferase.